Reading from the N-terminus, the 311-residue chain is Ribosomal RNA small subunit methyltransferase H (311 aa).

Residues 35–37 (GGH), D55, F80, D102, and Q109 each bind S-adenosyl-L-methionine.

This sequence belongs to the methyltransferase superfamily. RsmH family.

The protein localises to the cytoplasm. The catalysed reaction is cytidine(1402) in 16S rRNA + S-adenosyl-L-methionine = N(4)-methylcytidine(1402) in 16S rRNA + S-adenosyl-L-homocysteine + H(+). Functionally, specifically methylates the N4 position of cytidine in position 1402 (C1402) of 16S rRNA. The sequence is that of Ribosomal RNA small subunit methyltransferase H from Pseudoalteromonas atlantica (strain T6c / ATCC BAA-1087).